We begin with the raw amino-acid sequence, 395 residues long: Leukosialin (395 aa).

A signal peptide spans 1 to 19 (MALHLLLLFGACWVQVASP). Topologically, residues 20 to 248 (DSLQRTTMLP…TRSPSQESSG (229 aa)) are extracellular. The segment covering 27 to 56 (MLPSTPHITAPSTSEAQNASPSVSVGSGTV) has biased composition (polar residues). Residues 27–245 (MLPSTPHITA…PITTRSPSQE (219 aa)) form a disordered region. Low complexity predominate over residues 73–88 (SLTPLETTELSSLETS). Polar residues-rich tracts occupy residues 89–111 (AGAS…SKTS) and 145–154 (TAASTSISKG). The span at 155-166 (TSAPPTTVTTSS) shows a compositional bias: low complexity. Residue N167 is glycosylated (N-linked (GlcNAc...) asparagine). Residues 167 to 196 (NETSGPSVATTVSSKTSGPPVTTATGSLGP) are compositionally biased toward polar residues. Residues 205–241 (ATTATSSVESSSVARGTSVSSRKTSTTSTQDPITTRS) show a composition bias toward low complexity. Residues 249 to 271 (MLLVPMLIALVVVLALVALLLLW) traverse the membrane as a helical segment. The segment at 272–302 (RQRQKRRTGALTLSGGGKRNGVVDAWAGPAR) is required for interaction with EZR, MSN and RDX and for co-localization to microvilli. Topologically, residues 272–395 (RQRQKRRTGA…AKDEAAPQSL (124 aa)) are cytoplasmic. The short motif at 276–290 (KRRTGALTLSGGGKR) is the Nuclear localization signal element. A phosphoserine mark is found at S285 and S328. A disordered region spans residues 303–395 (VPDEEATTTS…AKDEAAPQSL (93 aa)). Positions 327 to 338 (GSGQRPTLTTFF) are enriched in polar residues. Position 333 is a phosphothreonine (T333). A phosphoserine mark is found at S339 and S343. Position 347 is a phosphoserine; by PKC/PRKCQ (S347). The residue at position 371 (S371) is a Phosphoserine. T378 carries the phosphothreonine modification. A compositionally biased stretch (basic and acidic residues) spans 385–395 (QAKDEAAPQSL).

Interacts with SIGLEC1. As to quaternary structure, interacts with isoform 2 of HIPK2. Interacts with CTNNB1. Interacts with RDX (via FERM domain). Interacts with EZR. Interacts with MSN. Phosphorylation at Ser-347 is regulated by chemokines, requires its association with ERM proteins (EZR, RDX and MSN) and is essential for its function in the regulation of T-cell trafficking to lymph nodes. In terms of processing, has a high content of sialic acid and O-linked carbohydrate structures. Post-translationally, cleavage by CTSG releases its extracellular domain and triggers its intramembrane proteolysis by gamma-secretase releasing the CD43 cytoplasmic tail chain (CD43-ct) which translocates to the nucleus. Sumoylated. As to expression, cell surface of thymocytes, T-lymphocytes, neutrophils, plasma cells and myelomas.

It is found in the membrane. It localises to the cell projection. The protein localises to the microvillus. Its subcellular location is the uropodium. The protein resides in the nucleus. It is found in the PML body. In terms of biological role, predominant cell surface sialoprotein of leukocytes which regulates multiple T-cell functions, including T-cell activation, proliferation, differentiation, trafficking and migration. Positively regulates T-cell trafficking to lymph-nodes via its association with ERM proteins (EZR, RDX and MSN). Negatively regulates Th2 cell differentiation and predisposes the differentiation of T-cells towards a Th1 lineage commitment. Promotes the expression of IFN-gamma by T-cells during T-cell receptor (TCR) activation of naive cells and induces the expression of IFN-gamma by CD4(+) T-cells and to a lesser extent by CD8(+) T-cells. Plays a role in preparing T-cells for cytokine sensing and differentiation into effector cells by inducing the expression of cytokine receptors IFNGR and IL4R, promoting IFNGR and IL4R signaling and by mediating the clustering of IFNGR with TCR. Acts as a major E-selectin ligand responsible for Th17 cell rolling on activated vasculature and recruitment during inflammation. Mediates Th17 cells, but not Th1 cells, adhesion to E-selectin. Acts as a T-cell counter-receptor for SIGLEC1. Protects cells from apoptotic signals, promoting cell survival. In Mus musculus (Mouse), this protein is Leukosialin (Spn).